Consider the following 343-residue polypeptide: Calcium/calmodulin-dependent protein kinase type 1B (343 aa).

Positions 15 to 270 (YEIRERLGSG…CQQALRHLWI (256 aa)) constitute a Protein kinase domain. Residues 21-29 (LGSGAFSEV) and K44 each bind ATP. The active-site Proton acceptor is D136. Residues 290–311 (KNFARTHWKRAFNATSFLRHIR) are calmodulin-binding. The disordered stretch occupies residues 319 to 343 (GEGASEQGMARHSHSGLRAGQPPKW).

The protein belongs to the protein kinase superfamily. CAMK Ser/Thr protein kinase family. CaMK subfamily. Phosphorylated by CAMKK1.

Its subcellular location is the cytoplasm. The protein resides in the nucleus. The enzyme catalyses L-seryl-[protein] + ATP = O-phospho-L-seryl-[protein] + ADP + H(+). It catalyses the reaction L-threonyl-[protein] + ATP = O-phospho-L-threonyl-[protein] + ADP + H(+). With respect to regulation, activated by Ca(2+)/calmodulin. In terms of biological role, calcium/calmodulin-dependent protein kinase belonging to a proposed calcium-triggered signaling cascade. In vitro phosphorylates CREB1 and SYN1/synapsin I. Phosphorylates and activates CAMK1. The polypeptide is Calcium/calmodulin-dependent protein kinase type 1B (PNCK) (Homo sapiens (Human)).